The sequence spans 177 residues: Nucleoside triphosphate/diphosphate phosphatase (177 aa).

Arginine 23 serves as the catalytic Proton donor. Asparagine 87, aspartate 103, aspartate 105, aspartate 107, aspartate 120, and glutamate 123 together coordinate Mg(2+).

The protein belongs to the Ntdp family. Requires Mg(2+) as cofactor.

The enzyme catalyses a ribonucleoside 5'-triphosphate + H2O = a ribonucleoside 5'-diphosphate + phosphate + H(+). It carries out the reaction a ribonucleoside 5'-diphosphate + H2O = a ribonucleoside 5'-phosphate + phosphate + H(+). Has nucleoside phosphatase activity towards nucleoside triphosphates and nucleoside diphosphates. In Streptococcus pneumoniae serotype 19F (strain G54), this protein is Nucleoside triphosphate/diphosphate phosphatase.